A 533-amino-acid chain; its full sequence is Glucose-6-phosphate isomerase (533 aa).

Glutamate 341 functions as the Proton donor in the catalytic mechanism. Catalysis depends on residues histidine 372 and lysine 501.

The protein belongs to the GPI family.

It is found in the cytoplasm. It carries out the reaction alpha-D-glucose 6-phosphate = beta-D-fructose 6-phosphate. Its pathway is carbohydrate biosynthesis; gluconeogenesis. It participates in carbohydrate degradation; glycolysis; D-glyceraldehyde 3-phosphate and glycerone phosphate from D-glucose: step 2/4. Catalyzes the reversible isomerization of glucose-6-phosphate to fructose-6-phosphate. This is Glucose-6-phosphate isomerase from Cereibacter sphaeroides (strain ATCC 17029 / ATH 2.4.9) (Rhodobacter sphaeroides).